The following is a 706-amino-acid chain: D-(-)-3-hydroxybutyrate oligomer hydrolase (706 aa).

The first 32 residues, 1 to 32 (MTTTSKNCLTLTSIAAAVAAVLVLSACGGGSA), serve as a signal peptide directing secretion. Ser-311 serves as the catalytic Charge relay system.

The protein belongs to the D-(-)-3-hydroxybutyrate oligomer hydrolase family.

It is found in the secreted. The enzyme catalyses (3R)-hydroxybutanoate dimer + H2O = 2 (R)-3-hydroxybutanoate + H(+). It functions in the pathway lipid metabolism; butanoate metabolism. Its function is as follows. Participates in the degradation of poly-3-hydroxybutyrate (PHB). It works downstream of poly(3-hydroxybutyrate) depolymerase, hydrolyzing D(-)-3-hydroxybutyrate oligomers of various length (3HB-oligomers) into 3HB-monomers. The sequence is that of D-(-)-3-hydroxybutyrate oligomer hydrolase from Polaromonas sp. (strain JS666 / ATCC BAA-500).